An 82-amino-acid chain; its full sequence is Sec-independent protein translocase protein TatA (82 aa).

A helical membrane pass occupies residues 1–21 (MGGISIWQLLIIAVIVVLLFG).

Belongs to the TatA/E family. As to quaternary structure, the Tat system comprises two distinct complexes: a TatABC complex, containing multiple copies of TatA, TatB and TatC subunits, and a separate TatA complex, containing only TatA subunits. Substrates initially bind to the TatABC complex, which probably triggers association of the separate TatA complex to form the active translocon.

Its subcellular location is the cell inner membrane. Functionally, part of the twin-arginine translocation (Tat) system that transports large folded proteins containing a characteristic twin-arginine motif in their signal peptide across membranes. TatA could form the protein-conducting channel of the Tat system. This Vibrio cholerae serotype O1 (strain ATCC 39315 / El Tor Inaba N16961) protein is Sec-independent protein translocase protein TatA.